Consider the following 290-residue polypeptide: 30 kDa spicule matrix protein alpha (290 aa).

A signal peptide spans 1–20 (MRGFVYVLVCVLALASFSRA). In terms of domain architecture, C-type lectin spans 92–162 (ANMYCGQMHP…YTNWERMTAP (71 aa)). Asparagine 102 carries N-linked (GlcNAc...) asparagine glycosylation.

Accumulates exclusively in mineralized tissues.

In terms of biological role, matrix protein of the sea urchin embryo spicule. The function of the matrix proteins is to direct crystal growth in certain orientations and inhibit growth in others. This chain is 30 kDa spicule matrix protein alpha (SM30A), found in Strongylocentrotus purpuratus (Purple sea urchin).